Consider the following 313-residue polypeptide: Solute carrier family 35 member E3 (313 aa).

Helical transmembrane passes span 14–34 (IIAGLLVNLLSSICIVFINKW), 40–60 (GFPNMTLTLIHFVMTWLGLFI), 77–97 (ILLLALSFCGFVVFTNLSLQS), 100–122 (IGTYQLAKVMTTPVIIAIQTMYY), 130–146 (IKLTLVPITLGVILNSY), 153–173 (LMGMIFATLGVLVTSLYQVWV), 187–207 (LLYYQAPMSSAFLLVLVPFFE), 215–235 (IFGPWSFLALFMVLLSGVIAF), 252–272 (TYNMFGHFKFCITLLGGYVLF), and 275–295 (PLSLNQGLGILCTLTGILAYT).

This sequence belongs to the TPT transporter family. SLC35E subfamily.

It localises to the membrane. Its function is as follows. Putative transporter. The polypeptide is Solute carrier family 35 member E3 (slc35e3) (Danio rerio (Zebrafish)).